The primary structure comprises 208 residues: Sec-independent protein translocase protein TatB (208 aa).

Residues 1–21 (MFDIGVGELTLIAVVALVVLG) traverse the membrane as a helical segment. A disordered region spans residues 188–208 (DAGTPAASMPSAPAKIQEKQP).

This sequence belongs to the TatB family. In terms of assembly, the Tat system comprises two distinct complexes: a TatABC complex, containing multiple copies of TatA, TatB and TatC subunits, and a separate TatA complex, containing only TatA subunits. Substrates initially bind to the TatABC complex, which probably triggers association of the separate TatA complex to form the active translocon.

Its subcellular location is the cell inner membrane. Its function is as follows. Part of the twin-arginine translocation (Tat) system that transports large folded proteins containing a characteristic twin-arginine motif in their signal peptide across membranes. Together with TatC, TatB is part of a receptor directly interacting with Tat signal peptides. TatB may form an oligomeric binding site that transiently accommodates folded Tat precursor proteins before their translocation. This Xanthomonas axonopodis pv. citri (strain 306) protein is Sec-independent protein translocase protein TatB.